The following is a 480-amino-acid chain: Cobyric acid synthase (480 aa).

The 188-residue stretch at 249–436 folds into the GATase cobBQ-type domain; the sequence is KLKVVVPVLT…LHGFLDSEAA (188 aa). C330 (nucleophile) is an active-site residue. H428 is an active-site residue.

This sequence belongs to the CobB/CobQ family. CobQ subfamily.

Its pathway is cofactor biosynthesis; adenosylcobalamin biosynthesis. Functionally, catalyzes amidations at positions B, D, E, and G on adenosylcobyrinic A,C-diamide. NH(2) groups are provided by glutamine, and one molecule of ATP is hydrogenolyzed for each amidation. This is Cobyric acid synthase from Vibrio vulnificus (strain YJ016).